Consider the following 277-residue polypeptide: Shikimate dehydrogenase (NADP(+)) (277 aa).

Residues 18 to 20 (SKS) and threonine 65 contribute to the shikimate site. Residue lysine 69 is the Proton acceptor of the active site. Residue glutamate 81 coordinates NADP(+). The shikimate site is built by asparagine 90 and aspartate 106. NADP(+)-binding positions include 130-134 (GAGGA), 154-159 (NRTFSK), and methionine 217. Tyrosine 219 contacts shikimate. Residue glycine 241 participates in NADP(+) binding.

It belongs to the shikimate dehydrogenase family. In terms of assembly, homodimer.

It catalyses the reaction shikimate + NADP(+) = 3-dehydroshikimate + NADPH + H(+). It participates in metabolic intermediate biosynthesis; chorismate biosynthesis; chorismate from D-erythrose 4-phosphate and phosphoenolpyruvate: step 4/7. In terms of biological role, involved in the biosynthesis of the chorismate, which leads to the biosynthesis of aromatic amino acids. Catalyzes the reversible NADPH linked reduction of 3-dehydroshikimate (DHSA) to yield shikimate (SA). This is Shikimate dehydrogenase (NADP(+)) from Vibrio vulnificus (strain CMCP6).